Here is a 416-residue protein sequence, read N- to C-terminus: Probable F-box protein At5g47300 (416 aa).

In terms of domain architecture, F-box spans T40–H86.

This chain is Probable F-box protein At5g47300, found in Arabidopsis thaliana (Mouse-ear cress).